The sequence spans 315 residues: Leucine-rich repeat-containing protein 75B (315 aa).

A disordered region spans residues 1-23; it reads MGARLGRRAGPEAGSEAGAAAGC. A compositionally biased stretch (low complexity) spans 11 to 23; sequence PEAGSEAGAAAGC. 2 LRR repeats span residues 182–195 and 207–220; these read LAVL…LSDE and LPRL…GNRL. Positions 284–315 are disordered; the sequence is PEGSAAGATTPASTWDSTAAGLGPEPQACCAR. A compositionally biased stretch (low complexity) spans 286 to 297; the sequence is GSAAGATTPAST.

The protein belongs to the LRRC75 family.

In terms of biological role, may suppress myogenic differentiation by modulating MYOG expression and Erk1/2 signaling. The protein is Leucine-rich repeat-containing protein 75B of Homo sapiens (Human).